The chain runs to 157 residues: Protein UXT (157 aa).

It belongs to the UXT family. Homohexamer. Component of the PAQosome complex which is responsible for the biogenesis of several protein complexes and which consists of R2TP complex members RUVBL1, RUVBL2, RPAP3 and PIH1D1, URI complex members PFDN2, PFDN6, PDRG1, UXT and URI1 as well as ASDURF, POLR2E and DNAAF10/WDR92. Interacts with LRPPRC. Interacts with androgen receptor AR (via N-terminus). Interacts with estrogen receptor ESR1; the interaction relocalizes ESR1 from the nucleus to the cytoplasm. In the nucleus, interacts specifically with RELA (via RHD domain) and forms a dynamic complex with NF-kappa-B and is recruited to the NF-kappa-B enhanceosome upon stimulation. Interacts with MECOM. Interacts with URI1. In terms of assembly, part of complex I composed of TNF-alpha receptor TNFRSF1A, TRADD, TRAF2 and RIPK1 formed in response to TNF-alpha stimulation. Within the complex, interacts (via TPQE motif) with TRAF2; the interaction prevents the recruitment of FADD and CASP8/caspase 8 to complex I. Post-translationally, ubiquitinated by E3 ubiquitin-protein ligase complex containing FBXO7; leading to proteasomal degradation. In terms of tissue distribution, ubiquitous. Expressed in prostate epithelial cells. Expressed in mammary epithelial cells. Highest levels in the heart, skeletal muscle, pancreas, kidney, liver, adrenal gland, peripheral blood leukocytes, lymph node, prostate, and thyroid and the lowest levels in bladder and uterus. Overexpressed in a number of tumor tissues.

It is found in the cytoplasm. The protein resides in the nucleus. Its subcellular location is the cytoskeleton. It localises to the microtubule organizing center. The protein localises to the centrosome. It is found in the spindle pole. Functionally, involved in gene transcription regulation. Acts in concert with the corepressor URI1 to regulate androgen receptor AR-mediated transcription. Together with URI1, associates with chromatin to the NKX3-1 promoter region. Negatively regulates the transcriptional activity of the estrogen receptor ESR1 by inducing its translocation into the cytoplasm. May act as nuclear chaperone that facilitates the formation of the NF-kappa-B enhanceosome and thus positively regulates NF-kappa-B transcription activity. Potential component of mitochondrial-associated LRPPRC, a multidomain organizer that potentially integrates mitochondria and the microtubular cytoskeleton with chromosome remodeling. Increasing concentrations of UXT contributes to progressive aggregation of mitochondria and cell death potentially through its association with LRPPRC. Suppresses cell transformation and it might mediate this function by interaction and inhibition of the biological activity of cell proliferation and survival stimulatory factors like MECOM. Plays a role in protecting cells against TNF-alpha-induced apoptosis by preventing the recruitment of FADD and caspase 8 to the apoptotic complex I, composed of TRADD, TRAF2 and RIPK1/RIP. The chain is Protein UXT (UXT) from Homo sapiens (Human).